The sequence spans 360 residues: Melanoma-associated antigen B16 (360 aa).

Residues 1–118 (MSQKNPEYAA…GNSVIPPDQP (118 aa)) form a disordered region. Residues 9-19 (AADHDHTREEM) show a composition bias toward basic and acidic residues. Residues 63 to 98 (CSSSQLLTASNQEDPAYETPSTSRGLQHPYVSSSES) show a composition bias toward polar residues. The 200-residue stretch at 125–324 (IDGKVNFLVN…TVFPSQYEEA (200 aa)) folds into the MAGE domain. The tract at residues 340 to 360 (AGPSSASGESSSDMGSNVPHI) is disordered. Over residues 341–360 (GPSSASGESSSDMGSNVPHI) the composition is skewed to low complexity.

In Rattus norvegicus (Rat), this protein is Melanoma-associated antigen B16 (Mageb16).